The sequence spans 349 residues: MYGLLKSALFGLPPETTHEITTSALRVAQRVGAHRAYAKQFTVTDPRLSVDAFGQTFPNPVGMAAGFDKNAEIPRALAGLGFGHIEVGAVTAERQPGNDRPRLFRLPDDNALVNRMGFNNEGADTVGARLDAEPLPDVPVGVNIGKSKTTPLADAPDDYTYTFSRVGDAVDYVVVNVSSPNTPGLRELQGRDQLAAILEALQDAGASPLLVKLSPDLHQDAVADAVELANDLGLDGIVATNTTTERPESLSHPHAGEQGGLSGAPIRERATEQVRFVAERTDQPVVGVGGVATAEDAYEKIRAGASVVQLYTALVYEGPWVAKRINEGLVSLLERDGFDSVEDAVGADL.

Residues 65-69 and Ala-89 each bind FMN; that span reads AGFDK. Residue Lys-69 participates in substrate binding. Residue 114–118 participates in substrate binding; it reads NRMGF. Positions 143 and 176 each coordinate FMN. Residue Asn-176 coordinates substrate. Residue Ser-179 is the Nucleophile of the active site. Asn-181 provides a ligand contact to substrate. Residues Lys-212 and Thr-240 each coordinate FMN. Residue 241–242 participates in substrate binding; it reads NT. Residues 244-265 are disordered; sequence TERPESLSHPHAGEQGGLSGAP. Residues 245-255 are compositionally biased toward basic and acidic residues; sequence ERPESLSHPHA. FMN is bound by residues Gly-263, Gly-290, and 311–312; that span reads YT.

It belongs to the dihydroorotate dehydrogenase family. Type 2 subfamily. In terms of assembly, monomer. Requires FMN as cofactor.

It is found in the cell membrane. The catalysed reaction is (S)-dihydroorotate + a quinone = orotate + a quinol. It functions in the pathway pyrimidine metabolism; UMP biosynthesis via de novo pathway; orotate from (S)-dihydroorotate (quinone route): step 1/1. Its function is as follows. Catalyzes the conversion of dihydroorotate to orotate with quinone as electron acceptor. The sequence is that of Dihydroorotate dehydrogenase (quinone) from Halobacterium salinarum (strain ATCC 29341 / DSM 671 / R1).